Here is a 131-residue protein sequence, read N- to C-terminus: Large-conductance mechanosensitive channel (131 aa).

Transmembrane regions (helical) follow at residues 8 to 28, 30 to 50, and 67 to 87; these read FAIR…GAFG, IVSS…LGGI, and GAFI…FLFV.

The protein belongs to the MscL family. Homopentamer.

It localises to the cell membrane. Channel that opens in response to stretch forces in the membrane lipid bilayer. May participate in the regulation of osmotic pressure changes within the cell. In Geobacillus kaustophilus (strain HTA426), this protein is Large-conductance mechanosensitive channel.